A 229-amino-acid polypeptide reads, in one-letter code: Ribonuclease 3 (229 aa).

Residues 5-134 (EQKLEQDFGI…FLGALYLDQG (130 aa)) form the RNase III domain. Glutamate 47 is a Mg(2+) binding site. Aspartate 51 is a catalytic residue. Aspartate 120 and glutamate 123 together coordinate Mg(2+). Glutamate 123 is an active-site residue. Positions 160-229 (DYKTALQERL…AKSALEQLGN (70 aa)) constitute a DRBM domain.

This sequence belongs to the ribonuclease III family. Homodimer. Mg(2+) is required as a cofactor.

Its subcellular location is the cytoplasm. It carries out the reaction Endonucleolytic cleavage to 5'-phosphomonoester.. Its function is as follows. Digests double-stranded RNA. Involved in the processing of primary rRNA transcript to yield the immediate precursors to the large and small rRNAs (23S and 16S). Also processes some mRNAs, and tRNAs when they are encoded in the rRNA operon. CRISPR (clustered regularly interspaced short palindromic repeat) is an adaptive immune system that provides protection against mobile genetic elements (viruses, transposable elements and conjugative plasmids). CRISPR clusters contain spacers, sequences complementary to antecedent mobile elements, and target invading nucleic acids. CRISPR clusters are transcribed and processed into CRISPR RNA (crRNA). In this organism endogenous ribonuclease 3 and Cas9 are required for correct coprocessing of pre-crRNA and the trans-encoded small RNA (tracrRNA). Cas9, crRNA and tracrRNA are required for cleavage of invading DNA. Complements pre-crRNA and tracRNA coprocessing defects in an rnc deletion in S.pyogenes strain 370. In Streptococcus thermophilus (strain ATCC BAA-491 / LMD-9), this protein is Ribonuclease 3.